The chain runs to 265 residues: GTP cyclohydrolase 1 type 2 homolog (265 aa).

A divalent metal cation contacts are provided by His-65, Asp-103, His-225, and Glu-228.

The protein belongs to the GTP cyclohydrolase I type 2/NIF3 family. In terms of assembly, homohexamer.

In Streptococcus pneumoniae serotype 4 (strain ATCC BAA-334 / TIGR4), this protein is GTP cyclohydrolase 1 type 2 homolog.